Reading from the N-terminus, the 353-residue chain is uncharacterized protein (353 aa).

The N-terminal stretch at methionine 1–alanine 30 is a signal peptide.

This is an uncharacterized protein from Salmonella typhi.